The sequence spans 131 residues: Fumarate reductase subunit C (131 aa).

3 consecutive transmembrane segments (helical) span residues 30–50 (EGTCLPQLWFSLVVLFGVFAL), 58–78 (AGFVGFLSNPIVMLINIVTLI), and 109–129 (IVRGLWGLTIVVTVVILAVAL).

This sequence belongs to the FrdC family. Part of an enzyme complex containing four subunits: a flavoprotein (FrdA), an iron-sulfur protein (FrdB), and two hydrophobic anchor proteins (FrdC and FrdD).

Its subcellular location is the cell inner membrane. Two distinct, membrane-bound, FAD-containing enzymes are responsible for the catalysis of fumarate and succinate interconversion; fumarate reductase is used in anaerobic growth, and succinate dehydrogenase is used in aerobic growth. Anchors the catalytic components of the fumarate reductase complex to the cell inner membrane, binds quinones. This is Fumarate reductase subunit C from Proteus mirabilis (strain HI4320).